Here is a 458-residue protein sequence, read N- to C-terminus: Phosphoglucosamine mutase (458 aa).

Catalysis depends on Ser106, which acts as the Phosphoserine intermediate. Mg(2+)-binding residues include Ser106, Asp247, Asp249, and Asp251. Phosphoserine is present on Ser106.

It belongs to the phosphohexose mutase family. The cofactor is Mg(2+). Post-translationally, activated by phosphorylation.

The enzyme catalyses alpha-D-glucosamine 1-phosphate = D-glucosamine 6-phosphate. Its function is as follows. Catalyzes the conversion of glucosamine-6-phosphate to glucosamine-1-phosphate. This chain is Phosphoglucosamine mutase, found in Chlamydia caviae (strain ATCC VR-813 / DSM 19441 / 03DC25 / GPIC) (Chlamydophila caviae).